The primary structure comprises 165 residues: Heme oxygenase (165 aa).

The protein belongs to the heme oxygenase family.

It carries out the reaction heme b + 3 reduced [NADPH--hemoprotein reductase] + 3 O2 = biliverdin IXalpha + CO + Fe(2+) + 3 oxidized [NADPH--hemoprotein reductase] + 3 H2O + H(+). In terms of biological role, catalyzes the opening of the heme ring to form the open-chain tetrapyrrole biliverdin IX with the release of iron and carbon monoxide (CO). This Xanthomonas campestris pv. campestris (strain 8004) protein is Heme oxygenase (bphO).